We begin with the raw amino-acid sequence, 634 residues long: MYDLLKTIDDPADLRRLDRRQLQPLADELRAFVLDSVSKTGGHLSSNLGTVELTIALHYVFNTPDDRIVWDVGHQTYPHKILTGRRDGMKTLRQFDGISGFPRRSESEYDTFGTAHSSTSISAALGMAIGSKLNGDDRFSIAVIGDGAMTAGMAFEAMNNAGVSEDAKLLVILNDNDMSISPPVGALNRHLARLMSGRFYAAARAGVERVLSVAPPVLELARKLEEHAKGMVVPATLFEEFGFNYIGPIDGHDLDSLIPTLQNIKELRGPQFLHVVTKKGQGYKLAEADPVLYHGPGKFNPAEGIKPSATPAKKTYTQVFGEWLCDAAELDARVVGITPAMREGSGMVEFEKRFPERYYDVGIAEQHAVTFAGGLATEGLKPVVAIYSTFLQRAYDQLIHDVALQNLPVVFAIDRAGLVGADGATHAGAYDLAFLRCIPNMTVMAASDENECRQMLHTALQQPNPTAVRYPRGAGTGVATVKAFTEIPLGKGEVRRRTSQPDGKRVAILAFGTMVAPSLAAADALDATVANMRFVKPIDAELVRELAQTHDYLVTVEEGCVMGGAGSACVEAMMEGGAVRPVLQLGLPDRFVDHGDPAKLLAMCGLDGDGIAKSIRERFLNHAANVASPAKRVA.

Thiamine diphosphate-binding positions include histidine 74 and 115-117 (AHS). Aspartate 146 contributes to the Mg(2+) binding site. Residues 147 to 148 (GA), asparagine 176, tyrosine 283, and glutamate 365 contribute to the thiamine diphosphate site. Asparagine 176 serves as a coordination point for Mg(2+).

This sequence belongs to the transketolase family. DXPS subfamily. As to quaternary structure, homodimer. Requires Mg(2+) as cofactor. It depends on thiamine diphosphate as a cofactor.

The catalysed reaction is D-glyceraldehyde 3-phosphate + pyruvate + H(+) = 1-deoxy-D-xylulose 5-phosphate + CO2. Its pathway is metabolic intermediate biosynthesis; 1-deoxy-D-xylulose 5-phosphate biosynthesis; 1-deoxy-D-xylulose 5-phosphate from D-glyceraldehyde 3-phosphate and pyruvate: step 1/1. In terms of biological role, catalyzes the acyloin condensation reaction between C atoms 2 and 3 of pyruvate and glyceraldehyde 3-phosphate to yield 1-deoxy-D-xylulose-5-phosphate (DXP). The sequence is that of 1-deoxy-D-xylulose-5-phosphate synthase from Burkholderia thailandensis (strain ATCC 700388 / DSM 13276 / CCUG 48851 / CIP 106301 / E264).